A 360-amino-acid polypeptide reads, in one-letter code: Cysteine proteinase 2 (360 aa).

The N-terminal stretch at 1–19 (MVPRRLFVLAVVVLADTAA) is a signal peptide. The propeptide at 20–142 (VVNSGFADSN…NHRMRAAAVA (123 aa)) is activation peptide. Residue Asn-125 is glycosylated (N-linked (GlcNAc...) asparagine). 2 disulfide bridges follow: Cys-164–Cys-207 and Cys-198–Cys-240. Cys-167 is an active-site residue. Residue Asn-256 is glycosylated (N-linked (GlcNAc...) asparagine). Cys-298 and Cys-348 are joined by a disulfide. Residues His-307 and Asn-327 contribute to the active site.

This sequence belongs to the peptidase C1 family. In terms of tissue distribution, expressed at the onset of germination.

The protein resides in the vacuole. Involved in the degradation of the storage protein zein. May play a role in proteolysis during emergencies. The chain is Cysteine proteinase 2 (CCP2) from Zea mays (Maize).